We begin with the raw amino-acid sequence, 414 residues long: Nuclear pore complex-interacting protein family member B7 (414 aa).

The signal sequence occupies residues 1–18; it reads MRLRFWLLIWLLLGFISH. Asn111 is a glycosylation site (N-linked (GlcNAc...) asparagine). 2 disordered regions span residues 242–262 and 335–402; these read RMGRQPPPPTQQHSITDNSLS and SPLP…LRTR. Positions 252–262 are enriched in polar residues; sequence QQHSITDNSLS. The span at 356–384 shows a compositional bias: basic and acidic residues; it reads EVEKPPKPKRWRVDEVEQSPKPKRQREAE. Positions 390–402 are enriched in basic residues; sequence KPKRRRLSKLRTR.

It belongs to the NPIP family.

The protein localises to the secreted. In Homo sapiens (Human), this protein is Nuclear pore complex-interacting protein family member B7 (NPIPB7).